Reading from the N-terminus, the 65-residue chain is Sperm protamine P1 (65 aa).

The tract at residues 1–65 (MARYRHSRSR…RYSRRRRRRY (65 aa)) is disordered.

This sequence belongs to the protamine P1 family. As to expression, testis.

Its subcellular location is the nucleus. The protein localises to the chromosome. In terms of biological role, protamines substitute for histones in the chromatin of sperm during the haploid phase of spermatogenesis. They compact sperm DNA into a highly condensed, stable and inactive complex. The polypeptide is Sperm protamine P1 (PRM1) (Lagorchestes hirsutus (Rufous hare-wallaby)).